We begin with the raw amino-acid sequence, 512 residues long: Glutamyl-tRNA(Gln) amidotransferase subunit A (512 aa).

Catalysis depends on charge relay system residues lysine 82 and serine 157. Serine 181 serves as the catalytic Acyl-ester intermediate.

It belongs to the amidase family. GatA subfamily. In terms of assembly, heterotrimer of A, B and C subunits.

The catalysed reaction is L-glutamyl-tRNA(Gln) + L-glutamine + ATP + H2O = L-glutaminyl-tRNA(Gln) + L-glutamate + ADP + phosphate + H(+). Functionally, allows the formation of correctly charged Gln-tRNA(Gln) through the transamidation of misacylated Glu-tRNA(Gln) in organisms which lack glutaminyl-tRNA synthetase. The reaction takes place in the presence of glutamine and ATP through an activated gamma-phospho-Glu-tRNA(Gln). This chain is Glutamyl-tRNA(Gln) amidotransferase subunit A, found in Bordetella petrii (strain ATCC BAA-461 / DSM 12804 / CCUG 43448).